A 202-amino-acid polypeptide reads, in one-letter code: MTIPYPLGPPPAPRILVLGIGNILWADEGFGVRAVEAFHKAYELSDNVTILDGGTQGLYLVQFVNEHDRLIVFDAIDYGLEPGTMKVVEDDEVPKFTGAKKMSLHQTGFQEVLSAADFMGHYPERLTLIGCQPLDLEDWGGPLTAPVRGVIPAAIETAVRVLRSWGVAVTARPEGAAVPPLLEHDIDFERYERRAEPAALNC.

Glu28, Asp74, and His105 together coordinate Ni(2+).

Belongs to the peptidase A31 family.

In terms of biological role, not known. Could be involved in the processing of hydrogenase. The protein is Hydrogenase expression/formation protein HupD (hupD) of Rhizobium leguminosarum bv. viciae.